A 337-amino-acid polypeptide reads, in one-letter code: Probable RuBisCO transcriptional regulator (337 aa).

The HTH lysR-type domain occupies 6–63 (FTLDQLRILKAIAVEGSFKRAADSLYVSQPAVSLQVQNLERQLDVPLFDRGGRRAQLT). Residues 23–42 (FKRAADSLYVSQPAVSLQVQ) constitute a DNA-binding region (H-T-H motif).

Belongs to the LysR transcriptional regulatory family.

Its function is as follows. Trans-acting transcriptional regulator of RuBisCO genes (rbcL and rbcS) expression. The polypeptide is Probable RuBisCO transcriptional regulator (rbcR) (Nostoc sp. (strain PCC 7120 / SAG 25.82 / UTEX 2576)).